We begin with the raw amino-acid sequence, 528 residues long: GMP synthase [glutamine-hydrolyzing] (528 aa).

A Glutamine amidotransferase type-1 domain is found at 13-203 (TVLVVDFGAQ…LYEAAGCRPT (191 aa)). C90 (nucleophile) is an active-site residue. Catalysis depends on residues H177 and E179. The GMPS ATP-PPase domain maps to 204–402 (WTMVNIVEDQ…LGLPAEMVWR (199 aa)). ATP is bound at residue 231–237 (SGGVDSA).

Homodimer.

The catalysed reaction is XMP + L-glutamine + ATP + H2O = GMP + L-glutamate + AMP + diphosphate + 2 H(+). It functions in the pathway purine metabolism; GMP biosynthesis; GMP from XMP (L-Gln route): step 1/1. Functionally, catalyzes the synthesis of GMP from XMP. In Thermobifida fusca (strain YX), this protein is GMP synthase [glutamine-hydrolyzing].